The chain runs to 492 residues: uncharacterized protein (492 aa).

266–273 (GIQGTGKS) lines the ATP pocket.

Belongs to the AAA ATPase family. Highly divergent.

The protein resides in the plastid. It localises to the chloroplast. This is an uncharacterized protein from Pyropia yezoensis (Susabi-nori).